A 131-amino-acid polypeptide reads, in one-letter code: Sec-independent protein translocase protein TatB (131 aa).

Residues 2–22 (FANIGWWEMLVLVMVGLVVLG) traverse the membrane as a helical segment. The tract at residues 90 to 131 (DSLFTGDFDRPTPKKPDAAGSAGPDATEQIGAGPIPFDSDAT) is disordered. The span at 96–106 (DFDRPTPKKPD) shows a compositional bias: basic and acidic residues.

It belongs to the TatB family. As to quaternary structure, the Tat system comprises two distinct complexes: a TatABC complex, containing multiple copies of TatA, TatB and TatC subunits, and a separate TatA complex, containing only TatA subunits. Substrates initially bind to the TatABC complex, which probably triggers association of the separate TatA complex to form the active translocon.

It is found in the cell membrane. In terms of biological role, part of the twin-arginine translocation (Tat) system that transports large folded proteins containing a characteristic twin-arginine motif in their signal peptide across membranes. Together with TatC, TatB is part of a receptor directly interacting with Tat signal peptides. TatB may form an oligomeric binding site that transiently accommodates folded Tat precursor proteins before their translocation. In Mycobacterium tuberculosis (strain ATCC 25177 / H37Ra), this protein is Sec-independent protein translocase protein TatB.